The following is a 547-amino-acid chain: ATP synthase subunit alpha (547 aa).

Residue 172 to 179 (GDRKTGKT) coordinates ATP.

The protein belongs to the ATPase alpha/beta chains family. In terms of assembly, F-type ATPases have 2 components, CF(1) - the catalytic core - and CF(0) - the membrane proton channel. CF(1) has five subunits: alpha(3), beta(3), gamma(1), delta(1), epsilon(1). CF(0) has three main subunits: a(1), b(2) and c(9-12). The alpha and beta chains form an alternating ring which encloses part of the gamma chain. CF(1) is attached to CF(0) by a central stalk formed by the gamma and epsilon chains, while a peripheral stalk is formed by the delta and b chains.

It localises to the cell membrane. The catalysed reaction is ATP + H2O + 4 H(+)(in) = ADP + phosphate + 5 H(+)(out). Functionally, produces ATP from ADP in the presence of a proton gradient across the membrane. The alpha chain is a regulatory subunit. The sequence is that of ATP synthase subunit alpha from Rhodococcus jostii (strain RHA1).